We begin with the raw amino-acid sequence, 476 residues long: Glycogen synthase (476 aa).

Lys-15 is an ADP-alpha-D-glucose binding site.

It belongs to the glycosyltransferase 1 family. Bacterial/plant glycogen synthase subfamily.

The catalysed reaction is [(1-&gt;4)-alpha-D-glucosyl](n) + ADP-alpha-D-glucose = [(1-&gt;4)-alpha-D-glucosyl](n+1) + ADP + H(+). The protein operates within glycan biosynthesis; glycogen biosynthesis. Functionally, synthesizes alpha-1,4-glucan chains using ADP-glucose. In Bacillus cereus (strain B4264), this protein is Glycogen synthase.